The following is a 23-amino-acid chain: Unknown protein NF016 from 2D-PAGE (23 aa).

The chain is Unknown protein NF016 from 2D-PAGE from Naegleria fowleri (Brain eating amoeba).